Consider the following 323-residue polypeptide: Acetyl esterase (323 aa).

Residues 91–93 (HGG) carry the Involved in the stabilization of the negatively charged intermediate by the formation of the oxyanion hole motif. Residues S165, D262, and H292 contribute to the active site.

The protein belongs to the 'GDXG' lipolytic enzyme family. As to quaternary structure, homodimer. Interacts with MalT and MelA.

Its subcellular location is the cytoplasm. In terms of biological role, displays esterase activity towards short chain fatty esters (acyl chain length of up to 8 carbons). Able to hydrolyze triacetylglycerol (triacetin) and tributyrylglycerol (tributyrin), but not trioleylglycerol (triolein) or cholesterol oleate. Negatively regulates MalT activity by antagonizing maltotriose binding. Inhibits MelA galactosidase activity. The protein is Acetyl esterase of Salmonella typhi.